A 37-amino-acid chain; its full sequence is MKVRASVRKICSRCVALKRHGVLIVLCSNPKHKQRQG.

It belongs to the bacterial ribosomal protein bL36 family.

It is found in the plastid. The protein resides in the chloroplast. This is Large ribosomal subunit protein bL36c (rpl36) from Cyanidium caldarium (Red alga).